Here is a 228-residue protein sequence, read N- to C-terminus: Ephrin-A5 (228 aa).

The N-terminal stretch at 1 to 20 is a signal peptide; sequence MPHVEMLLLAVAALWVCVRG. The Ephrin RBD domain occupies 29–162; sequence ADRYAVYWNS…KLKVFVRPAN (134 aa). Asn37 carries an N-linked (GlcNAc...) asparagine glycan. Intrachain disulfides connect Cys62–Cys102 and Cys90–Cys151. A lipid anchor (GPI-anchor amidated asparagine) is attached at Asn203. The propeptide at 204 to 228 is removed in mature form; it reads AAQTPRIPIRLLATLLFLLAMLLIL.

This sequence belongs to the ephrin family. Expressed in a graded fashion across the tectum being more strongly expressed towards the posterior pole.

The protein localises to the cell membrane. In terms of biological role, cell surface GPI-bound ligand for Eph receptors, a family of receptor tyrosine kinases which are crucial for migration, repulsion and adhesion during neuronal, vascular and epithelial development. Binds promiscuously Eph receptors residing on adjacent cells, leading to contact-dependent bidirectional signaling into neighboring cells. Induces compartmentalized signaling within a caveolae-like membrane microdomain when bound to the extracellular domain of its cognate receptor. This signaling event requires the activity of the Fyn tyrosine kinase. Activates the EPHA3 receptor to regulate cell-cell adhesion and cytoskeletal organization. With the receptor EPHA2 may regulate lens fiber cells shape and interactions and be important for lens transparency maintenance. May function actively to stimulate axon fasciculation. Induces growth cone collapse and repulsion of retinal ganglion cell axons. This chain is Ephrin-A5 (EFNA5), found in Gallus gallus (Chicken).